Consider the following 235-residue polypeptide: Protein Thf1 (235 aa).

The stretch at 183 to 204 (DKLNKDLELYRSNLDKMAQALV) forms a coiled coil. Residues 213-235 (DRKKREQRKQQSTAPVAPPSSNE) form a disordered region. Residues 222 to 235 (QQSTAPVAPPSSNE) show a composition bias toward polar residues.

This sequence belongs to the THF1 family.

May be involved in photosynthetic membrane biogenesis. In Nostoc punctiforme (strain ATCC 29133 / PCC 73102), this protein is Protein Thf1.